The sequence spans 219 residues: MGEKRQARQGADVLLQEEPLRFQTRKQVGLLGGNFNPVHLAHLVMADQVQNQLGLDKVYLMPTYLPPHVDEKKTISSEHRLAMLELAVADNPCLDIEPIELIRKGKSYTYDTMKALKEANPDTDYYFIIGGDMVEYLPKWHRIDDLLHLVQFVGIRRPNYPTESTYPIIWVDVPQMAISSTLIRQKVKSGCSTRYLLPENVINYIQEKGLYQDELDNKL.

It belongs to the NadD family.

It catalyses the reaction nicotinate beta-D-ribonucleotide + ATP + H(+) = deamido-NAD(+) + diphosphate. It participates in cofactor biosynthesis; NAD(+) biosynthesis; deamido-NAD(+) from nicotinate D-ribonucleotide: step 1/1. In terms of biological role, catalyzes the reversible adenylation of nicotinate mononucleotide (NaMN) to nicotinic acid adenine dinucleotide (NaAD). This is Probable nicotinate-nucleotide adenylyltransferase from Enterococcus faecalis (strain ATCC 700802 / V583).